The primary structure comprises 476 residues: Serine/threonine-protein kinase PknF (476 aa).

Residues T8 and T13 each carry the phosphothreonine; by autocatalysis modification. Residues 12–279 (FTIVRQLGSG…FARALGHRLG (268 aa)) form the Protein kinase domain. ATP-binding positions include 18–26 (LGSGGMGEV) and K41. D137 functions as the Proton acceptor in the catalytic mechanism. Residues T173, T175, and T287 each carry the phosphothreonine; by autocatalysis modification. A Phosphoserine; by autocatalysis modification is found at S290. Residues 332–376 (ADDERAAQPARTRTTTSAGTTTSVAPASTTRPAPTTPTTTGAADT) form a disordered region. Low complexity predominate over residues 338–376 (AQPARTRTTTSAGTTTSVAPASTTRPAPTTPTTTGAADT).

This sequence belongs to the protein kinase superfamily. Ser/Thr protein kinase family. Dephosphorylated by PstP.

The enzyme catalyses L-seryl-[protein] + ATP = O-phospho-L-seryl-[protein] + ADP + H(+). The catalysed reaction is L-threonyl-[protein] + ATP = O-phospho-L-threonyl-[protein] + ADP + H(+). In Mycobacterium bovis (strain ATCC BAA-935 / AF2122/97), this protein is Serine/threonine-protein kinase PknF (pknF).